Reading from the N-terminus, the 320-residue chain is MATTKLGNTKSASRAINYAEERAEEKSGLNCDVDYAKSYFKQTRALYGKENGVQAHTVIQSFKPGEVTAKECNEIGLELAKKIAPDYQVAVYTHTDKDHYHNHIIINSVNLETGNKYQSNKEQRDFIKKANDQLCEERGLSVPEKSSEIRYTLAEQNMIDKDKRSWKNDIRMAVEETKDNAVAFEEFNTLLKEKGVEITRVTKNNVTYRHIEEDKKVRGNKLGDSYDKGVIENGFAIEKFRREREEEREYDEYADTFEVDWDAFAENSEDLRKRRIARTEETKQASNKIYIRDERTTGLERKGIAGNQVEFEKDDGGLSR.

Its function is as follows. This protein is probably required for relaxation complex formation and plasmid mobilization by conjugative plasmids. The protein is Protein rlx (rlx) of Staphylococcus aureus.